The primary structure comprises 125 residues: Mini-ribonuclease 3 (125 aa).

D11 is a catalytic residue.

It belongs to the MrnC RNase family. Homodimer. Mg(2+) serves as cofactor.

It is found in the cytoplasm. Functionally, involved in correct processing of both the 5' and 3' ends of 23S rRNA precursor. Processes 30S rRNA precursor transcript even in absence of ribonuclease 3 (Rnc); Rnc processes 30S rRNA into smaller rRNA precursors. The polypeptide is Mini-ribonuclease 3 (Acholeplasma laidlawii (strain PG-8A)).